The following is an 894-amino-acid chain: Histone-lysine N-methyltransferase EZ2 (894 aa).

Residues 1–11 (MASSSKASDSS) are compositionally biased toward low complexity. Disordered stretches follow at residues 1–25 (MASS…GKDA), 395–447 (SSVS…KRQK), and 491–513 (KKTS…VGRQ). The segment covering 395–421 (SSVSAEESTTTPSADISETENVSSDLP) has biased composition (polar residues). Over residues 425–435 (LRKHKISKHGP) the composition is skewed to basic residues. Residues 503–513 (PATTMENVGRQ) show a composition bias toward polar residues. Residues 527-577 (TLSCWSALERDLYLKGIEIFGKNSCLIARNLLSGLKTCIEVANYMYNNGAA) enclose the SANT domain. In terms of domain architecture, CXC spans 627-731 (AGHPTVRKRT…SLGEPLARGD (105 aa)). An SET domain is found at 746-861 (QRILLGRSDV…ASEELFYDYR (116 aa)). The segment at 867 to 894 (APAWARRPEGSKKDEASVSHRRAHKVAR) is disordered. Over residues 872 to 884 (RRPEGSKKDEASV) the composition is skewed to basic and acidic residues. Positions 885–894 (SHRRAHKVAR) are enriched in basic residues.

Belongs to the class V-like SAM-binding methyltransferase superfamily. Histone-lysine methyltransferase family. EZ subfamily.

It is found in the nucleus. The catalysed reaction is L-lysyl(27)-[histone H3] + 3 S-adenosyl-L-methionine = N(6),N(6),N(6)-trimethyl-L-lysyl(27)-[histone H3] + 3 S-adenosyl-L-homocysteine + 3 H(+). Its function is as follows. Polycomb group (PcG) protein. Catalytic subunit of some PcG multiprotein complex, which methylates 'Lys-27' of histone H3, leading to transcriptional repression of the affected target genes. PcG proteins are not required to initiate repression, but to maintain it during later stages of development. The chain is Histone-lysine N-methyltransferase EZ2 (EZ2) from Zea mays (Maize).